The primary structure comprises 241 residues: ATP synthase subunit a (241 aa).

5 helical membrane passes run 30–50, 91–111, 128–148, 193–213, and 214–234; these read GQVFLTSWILLGSLLVFISLG, FIGTLFLFVFVSNWGGALIPW, INTTIALALLVSLSYFYAGLS, LVVGVLVFLVPLVLPIPVMFL, and GLFTSAIQALIFATLAAYYIG.

This sequence belongs to the ATPase A chain family. In terms of assembly, F-type ATPases have 2 components, CF(1) - the catalytic core - and CF(0) - the membrane proton channel. CF(1) has five subunits: alpha(3), beta(3), gamma(1), delta(1), epsilon(1). CF(0) has four main subunits: a, b, b' and c.

The protein resides in the cellular thylakoid membrane. Its function is as follows. Key component of the proton channel; it plays a direct role in the translocation of protons across the membrane. The protein is ATP synthase subunit a of Prochlorococcus marinus (strain MIT 9515).